Reading from the N-terminus, the 359-residue chain is Peptide chain release factor 1 (359 aa).

Q236 is modified (N5-methylglutamine).

This sequence belongs to the prokaryotic/mitochondrial release factor family. Methylated by PrmC. Methylation increases the termination efficiency of RF1.

It is found in the cytoplasm. Functionally, peptide chain release factor 1 directs the termination of translation in response to the peptide chain termination codons UAG and UAA. This is Peptide chain release factor 1 (prfA) from Mycoplasma genitalium (strain ATCC 33530 / DSM 19775 / NCTC 10195 / G37) (Mycoplasmoides genitalium).